Consider the following 377-residue polypeptide: Rhodopsin, long-wavelength (377 aa).

At 1 to 51 (MIAVSGPSYEAFSYGGQARFNNQTVVDKVPPDMLHLIDANWYQYPPLNPMW) the chain is on the extracellular side. Asparagine 22 carries N-linked (GlcNAc...) asparagine glycosylation. A helical transmembrane segment spans residues 52 to 76 (HGILGFVIGMLGFVSAMGNGMVVYI). The Cytoplasmic segment spans residues 77–88 (FLSTKSLRTPSN). The helical transmembrane segment at 89–113 (LFVINLAISNFLMMFCMSPPMVINC) threads the bilayer. The Extracellular portion of the chain corresponds to 114-128 (YYETWVLGPLFCQIY). Cysteine 125 and cysteine 202 are oxidised to a cystine. Residues 129–148 (AMLGSLFGCGSIWTMTMIAF) form a helical membrane-spanning segment. Over 149–167 (DRYNVIVKGLSGKPLSING) the chain is Cytoplasmic. Residues 168 to 191 (ALIRIIAIWLFSLGWTIAPMFGWN) traverse the membrane as a helical segment. Residues 192–215 (RYVPEGNMTACGTDYFNRGLLSAS) are Extracellular-facing. Asparagine 198 is a glycosylation site (N-linked (GlcNAc...) asparagine). A helical transmembrane segment spans residues 216-243 (YLVCYGIWVYFVPLFLIIYSYWFIIQAV). Over 244-278 (AAHEKNMREQAKKMNVASLRSSENQNTSAECKLAK) the chain is Cytoplasmic. The chain crosses the membrane as a helical span at residues 279 to 302 (VALMTISLWFMAWTPYLVINFSGI). Topologically, residues 303-309 (FNLVKIS) are extracellular. Residues 310 to 334 (PLFTIWGSLFAKANAVYNPIVYGIS) form a helical membrane-spanning segment. An N6-(retinylidene)lysine modification is found at lysine 321. The Cytoplasmic segment spans residues 335–377 (HPKYRAALFAKFPSLACAAEPSSDAVSTTSGTTTVTDNEKSNA). Residues 357 to 370 (SDAVSTTSGTTTVT) are compositionally biased toward low complexity. The interval 357 to 377 (SDAVSTTSGTTTVTDNEKSNA) is disordered.

This sequence belongs to the G-protein coupled receptor 1 family. Opsin subfamily. Phosphorylated on some or all of the serine and threonine residues present in the C-terminal region.

The protein localises to the membrane. In terms of biological role, visual pigments are the light-absorbing molecules that mediate vision. They consist of an apoprotein, opsin, covalently linked to 11-cis-retinal. The polypeptide is Rhodopsin, long-wavelength (Apis mellifera (Honeybee)).